We begin with the raw amino-acid sequence, 130 residues long: Small ribosomal subunit protein uS11 (130 aa).

The protein belongs to the universal ribosomal protein uS11 family. Part of the 30S ribosomal subunit. Interacts with proteins S7 and S18. Binds to IF-3.

Functionally, located on the platform of the 30S subunit, it bridges several disparate RNA helices of the 16S rRNA. Forms part of the Shine-Dalgarno cleft in the 70S ribosome. The protein is Small ribosomal subunit protein uS11 of Xanthomonas campestris pv. campestris (strain B100).